The sequence spans 406 residues: Phosphopentomutase (406 aa).

Mn(2+)-binding residues include Asp-10, Asp-305, His-310, Asp-346, His-347, and His-358.

The protein belongs to the phosphopentomutase family. Mn(2+) serves as cofactor.

The protein localises to the cytoplasm. It catalyses the reaction 2-deoxy-alpha-D-ribose 1-phosphate = 2-deoxy-D-ribose 5-phosphate. The catalysed reaction is alpha-D-ribose 1-phosphate = D-ribose 5-phosphate. The protein operates within carbohydrate degradation; 2-deoxy-D-ribose 1-phosphate degradation; D-glyceraldehyde 3-phosphate and acetaldehyde from 2-deoxy-alpha-D-ribose 1-phosphate: step 1/2. Its function is as follows. Isomerase that catalyzes the conversion of deoxy-ribose 1-phosphate (dRib-1-P) and ribose 1-phosphate (Rib-1-P) to deoxy-ribose 5-phosphate (dRib-5-P) and ribose 5-phosphate (Rib-5-P), respectively. In Vibrio parahaemolyticus serotype O3:K6 (strain RIMD 2210633), this protein is Phosphopentomutase.